Consider the following 428-residue polypeptide: MPPTGEEPSGHAESKPPASDPMSTPGTGQEQLPLSGIRVIDVGNFLAGPYAASILGEFGAEVLKIEHPLGGDPMRRFGTATARHDATLAWLSEARNRKSVTIDLRQQEGVALFLKLVAKSDILIENFRPGTMEEWGLSWPVLQATNPGLIMLRVSGYGQTGPYRRRSGFAHIAHAFSGLSYLAGFPGETPVLPGTAPLGDYIASLFGAIGILIALRHKEQTGRGQLIDVGIYEAVFRILDEIAPAYGLFGKIREREGAGSFIAVPHGHFRSKDGKWVAIACTTDKMFERLAEAMERPELASPELYGDQRKRLAARDIVNQITIEWVGSLTRDEVMRRCLEKEVPVGPLNSIADMFNDEHFLARGNFACIEAEGIGEVVVPNVIPRLSETPGRVTNLGPPLGNATYEVLRELLDISAEEIKRLRSRKII.

Residues 1–31 (MPPTGEEPSGHAESKPPASDPMSTPGTGQEQ) are disordered. Residues 21–31 (PMSTPGTGQEQ) are compositionally biased toward polar residues. Catalysis depends on D200, which acts as the Nucleophile.

This sequence belongs to the CoA-transferase III family. As to quaternary structure, forms a large complex composed of six heterodimers (alpha, beta).

The catalysed reaction is succinyl-CoA + (S)-malate = (S)-malyl-CoA + succinate. The enzyme catalyses (3S)-citramalate + succinyl-CoA = (3S)-citramalyl-CoA + succinate. In terms of biological role, involved in the 3-hydroxypropionate cycle used for autotrophic carbon dioxide fixation. Catalyzes the transfer of CoA moiety from succinyl-CoA to L-malate to yield L-malyl-CoA. It is highly specific for succinyl-CoA as the CoA donor, however it can accept L-citramalate instead of L-malate as the CoA acceptor. The polypeptide is Succinyl-CoA--L-malate CoA-transferase alpha subunit (smtA) (Chloroflexus aurantiacus).